Here is a 120-residue protein sequence, read N- to C-terminus: NAD(P)H-quinone oxidoreductase subunit 3, chloroplastic (120 aa).

3 consecutive transmembrane segments (helical) span residues 2–22 (FLLY…VIPI), 64–84 (MFAL…PWAL), and 88–108 (ILGV…VLGL).

This sequence belongs to the complex I subunit 3 family. As to quaternary structure, NDH is composed of at least 16 different subunits, 5 of which are encoded in the nucleus.

It is found in the plastid. The protein localises to the chloroplast thylakoid membrane. It catalyses the reaction a plastoquinone + NADH + (n+1) H(+)(in) = a plastoquinol + NAD(+) + n H(+)(out). It carries out the reaction a plastoquinone + NADPH + (n+1) H(+)(in) = a plastoquinol + NADP(+) + n H(+)(out). Functionally, NDH shuttles electrons from NAD(P)H:plastoquinone, via FMN and iron-sulfur (Fe-S) centers, to quinones in the photosynthetic chain and possibly in a chloroplast respiratory chain. The immediate electron acceptor for the enzyme in this species is believed to be plastoquinone. Couples the redox reaction to proton translocation, and thus conserves the redox energy in a proton gradient. The sequence is that of NAD(P)H-quinone oxidoreductase subunit 3, chloroplastic from Oenothera argillicola (Appalachian evening primrose).